We begin with the raw amino-acid sequence, 492 residues long: MGAKDITGRSTTQGFAQQHGGVSDVVVKTPFYQVSCCGPVSWTSGCHSLTESTCSRLFYILLHMGASAICCLLLSKTVVERVWGKAHGIQMPSVLCAHLFGNSDCPVLSGSGAVYRVCAGTATFHLLQAVLLVRLHSPTSPRAQLHNSFWSLKLLFLLGLCTAAFCIPDEHLFPAWHYIGICGGFTFILLQLVLITAFAQSWNKNWQTGAAQDCSWFLGVLLATLGFYSMAGVGAVLLFHHYTHPDGCLLNKMLLSLHLCFCGLLSLLSIAPCIRLRQPNSGLLQASIISCYIMYLTFSALSSRPPETIIFQGQNHTLCLPGQNKMEPQIPDASVAVFSASIMYACVLFACNEASYLAQLFGPLWIIKVYKYEFQKPSVCFCCPQTVEPEDGQGSRARPADQETPPAAQVQSQHLSYSYSGFHFAFFLASLYVMVTLTNWFSYEEAELEKTFTKGSWATFWVKVASCWACVLLYLGLLLAPLLAHHSESPPP.

10 consecutive transmembrane segments (helical) span residues 58–78 (FYILLHMGASAICCLLLSKTV), 113–133 (AVYRVCAGTATFHLLQAVLLV), 148–168 (SFWSLKLLFLLGLCTAAFCIP), 179–199 (IGICGGFTFILLQLVLITAFA), 217–237 (FLGVLLATLGFYSMAGVGAVL), 254–274 (LLSLHLCFCGLLSLLSIAPCI), 281–301 (SGLLQASIISCYIMYLTFSAL), 330–350 (IPDASVAVFSASIMYACVLFA), 421–441 (GFHFAFFLASLYVMVTLTNWF), and 464–484 (VASCWACVLLYLGLLLAPLLA).

The protein belongs to the TDE1 family.

The protein resides in the membrane. In terms of biological role, incorporates a polar amino acid serine into membranes and facilitates the synthesis of two serine-derived lipids, phosphatidylserine and sphingolipids. This chain is Serine incorporator 4 (Serinc4), found in Rattus norvegicus (Rat).